The following is a 360-amino-acid chain: Homoserine O-acetyltransferase (360 aa).

One can recognise an AB hydrolase-1 domain in the interval 41–344 (NAILICHALT…DYGHDAFLVD (304 aa)). Serine 144 acts as the Nucleophile in catalysis. Residue arginine 213 participates in substrate binding. Catalysis depends on residues aspartate 305 and histidine 338. Aspartate 339 contributes to the substrate binding site.

It belongs to the AB hydrolase superfamily. MetX family. Homodimer.

It localises to the cytoplasm. The enzyme catalyses L-homoserine + acetyl-CoA = O-acetyl-L-homoserine + CoA. It functions in the pathway amino-acid biosynthesis; L-methionine biosynthesis via de novo pathway; O-acetyl-L-homoserine from L-homoserine: step 1/1. Its function is as follows. Transfers an acetyl group from acetyl-CoA to L-homoserine, forming acetyl-L-homoserine. This is Homoserine O-acetyltransferase from Pasteurella multocida (strain Pm70).